The sequence spans 69 residues: FMRFamide-like neuropeptides 24 (69 aa).

An N-terminal signal peptide occupies residues 1–25 (MLSSRTSSIILILAILVAIMAVAQC). Positions 26–51 (RNIQYDVEEMTPEAAFRYAQWGEIPH) are excised as a propeptide. Residue Phe64 is modified to Phenylalanine amide. A propeptide spanning residues 68-69 (SI) is cleaved from the precursor.

The protein belongs to the FARP (FMRFamide related peptide) family.

It is found in the secreted. In terms of biological role, probable FMRFamide-like neuropeptides. Plays a role in behaviors associated with a sleep-like state induced by stress (SIS), acting in concert with the FMRFamide related peptide flp-13 and neuropeptide-like protein nlp-8. In Caenorhabditis elegans, this protein is FMRFamide-like neuropeptides 24.